A 327-amino-acid polypeptide reads, in one-letter code: DNA-directed RNA polymerase subunit alpha (327 aa).

Positions 1–233 (MQNVLKSFLT…HQLAAFVDLK (233 aa)) are alpha N-terminal domain (alpha-NTD). Residues 247–327 (VNPLLLRPVE…GWPPADLTDQ (81 aa)) form an alpha C-terminal domain (alpha-CTD) region.

This sequence belongs to the RNA polymerase alpha chain family. In terms of assembly, homodimer. The RNAP catalytic core consists of 2 alpha, 1 beta, 1 beta' and 1 omega subunit. When a sigma factor is associated with the core the holoenzyme is formed, which can initiate transcription.

It catalyses the reaction RNA(n) + a ribonucleoside 5'-triphosphate = RNA(n+1) + diphosphate. Its function is as follows. DNA-dependent RNA polymerase catalyzes the transcription of DNA into RNA using the four ribonucleoside triphosphates as substrates. The protein is DNA-directed RNA polymerase subunit alpha of Coxiella burnetii (strain CbuK_Q154) (Coxiella burnetii (strain Q154)).